Reading from the N-terminus, the 557-residue chain is Nucleoprotein (557 aa).

The tract at residues 54-235 (MRKDKRSDDD…ITKEESANNI (182 aa)) is binding site for the cap structure m7GTP. Residues Asp379 and Glu381 each contribute to the Mn(2+) site. Residues Glu389, Cys496, His499, and Cys518 each coordinate Zn(2+). Asp522 contributes to the Mn(2+) binding site.

It belongs to the arenaviridae nucleocapsid protein family. In terms of assembly, homomultimerizes to form the nucleocapsid. Binds to viral genomic RNA. Interacts with glycoprotein G2. Interacts with protein Z; this interaction probably directs the encapsidated genome to budding sites. Interacts with protein L; this interaction does not interfere with Z-L interaction. Interacts with host IKBKE (via Protein kinase domain); the interaction inhibits IKBKE kinase activity.

It localises to the virion. The protein resides in the host cytoplasm. Functionally, encapsidates the genome, protecting it from nucleases. The encapsidated genomic RNA is termed the nucleocapsid (NC). Serves as template for viral transcription and replication. The increased presence of protein N in host cell does not seem to trigger the switch from transcription to replication as observed in other negative strain RNA viruses. Through the interaction with host IKBKE, strongly inhibits the phosphorylation and nuclear translocation of host IRF3, a protein involved in interferon activation pathway, leading to the inhibition of interferon-beta and IRF3-dependent promoters activation. Also encodes a functional 3'-5' exoribonuclease that degrades preferentially dsRNA substrates and thereby participates in the suppression of interferon induction. The protein is Nucleoprotein of Calomys callosus (Large vesper mouse).